We begin with the raw amino-acid sequence, 138 residues long: uncharacterized protein (138 aa).

The next 3 helical transmembrane spans lie at 17–37, 43–63, and 117–137; these read LIVSTIYIVLFFAILNLTVFF, INLILKNSCVVSFVVVWLLVC, and FWWMNFSLYLLGSLISIVVSL.

It is found in the cell membrane. This is an uncharacterized protein from Mycoplasma pneumoniae (strain ATCC 29342 / M129 / Subtype 1) (Mycoplasmoides pneumoniae).